A 102-amino-acid chain; its full sequence is Large ribosomal subunit protein uL24 (102 aa).

This sequence belongs to the universal ribosomal protein uL24 family. In terms of assembly, part of the 50S ribosomal subunit.

Its function is as follows. One of two assembly initiator proteins, it binds directly to the 5'-end of the 23S rRNA, where it nucleates assembly of the 50S subunit. One of the proteins that surrounds the polypeptide exit tunnel on the outside of the subunit. The chain is Large ribosomal subunit protein uL24 from Limosilactobacillus fermentum (strain NBRC 3956 / LMG 18251) (Lactobacillus fermentum).